Reading from the N-terminus, the 230-residue chain is Thymidylate kinase (230 aa).

20 to 27 is an ATP binding site; it reads GGEGSGKS.

Belongs to the thymidylate kinase family.

The enzyme catalyses dTMP + ATP = dTDP + ADP. In terms of biological role, phosphorylation of dTMP to form dTDP in both de novo and salvage pathways of dTTP synthesis. This is Thymidylate kinase from Nitrobacter hamburgensis (strain DSM 10229 / NCIMB 13809 / X14).